A 359-amino-acid chain; its full sequence is Protein-glutamate methylesterase/protein-glutamine glutaminase 2 (359 aa).

Positions 6-123 (KVMIVDDSAL…KSFLEDASND (118 aa)) constitute a Response regulatory domain. Asp57 is modified (4-aspartylphosphate). Residues 167 to 359 (ERTTDQLVAI…GAIVGYGKSC (193 aa)) enclose the CheB-type methylesterase domain. Active-site residues include Ser179, His205, and Asp301.

Belongs to the CheB family. Phosphorylated by CheA. Phosphorylation of the N-terminal regulatory domain activates the methylesterase activity.

It is found in the cytoplasm. It carries out the reaction [protein]-L-glutamate 5-O-methyl ester + H2O = L-glutamyl-[protein] + methanol + H(+). The catalysed reaction is L-glutaminyl-[protein] + H2O = L-glutamyl-[protein] + NH4(+). Functionally, involved in chemotaxis. Part of a chemotaxis signal transduction system that modulates chemotaxis in response to various stimuli. Catalyzes the demethylation of specific methylglutamate residues introduced into the chemoreceptors (methyl-accepting chemotaxis proteins or MCP) by CheR. Also mediates the irreversible deamidation of specific glutamine residues to glutamic acid. This chain is Protein-glutamate methylesterase/protein-glutamine glutaminase 2, found in Dechloromonas aromatica (strain RCB).